Consider the following 92-residue polypeptide: Defensin Lucifensin (92 aa).

An N-terminal signal peptide occupies residues M1–A23. Residues L24–R52 constitute a propeptide that is removed on maturation. 3 disulfides stabilise this stretch: C55–C82, C68–C88, and C72–C90.

It belongs to the invertebrate defensin family. Type 1 subfamily. Post-translationally, the disulfide bonds are essential for antimicrobial activity. As to expression, larval fat body, hemolymph and salivary glands (at protein level). Expressed in the salivary glands of all larval stages.

The protein resides in the secreted. It is found in the host cell membrane. Its function is as follows. Shows strong antibacterial activity against numerous Gram-positive bacteria. It selectively inhibits peptidoglycan biosynthesis through complex formation with the cell wall precursor lipid II (1:1 molar ratio) thus inhibiting cell wall synthesis. Shows antibacterial activity against the Gram-positive bacteria M.luteus, E.fecalis (MIC=32 mg/L), S.aureus (MIC=16 mg/L), S.carnosus (MIC=2 mg/L), S.pneumoniae (MIC=2 mg/L) and S.pyogenes (MIC=2 mg/L) and against a number of methicillin-resistant S.aureus and glycopeptide-intermediate S.aureus isolates. Does not show antibacterial activity against Gram-negative bacteria or antifungal activity against C.utilis. Shows slight antifungal activity against C.albicans. This chain is Defensin Lucifensin, found in Lucilia sericata (Green bottle fly).